The following is a 361-amino-acid chain: Phosphoserine aminotransferase (361 aa).

Arg43 contributes to the L-glutamate binding site. Pyridoxal 5'-phosphate is bound by residues 77–78, Trp103, Thr152, Asp172, and Gln195; that span reads AS. Lys196 bears the N6-(pyridoxal phosphate)lysine mark. Position 237–238 (237–238) interacts with pyridoxal 5'-phosphate; it reads NT.

Belongs to the class-V pyridoxal-phosphate-dependent aminotransferase family. SerC subfamily. As to quaternary structure, homodimer. Requires pyridoxal 5'-phosphate as cofactor.

Its subcellular location is the cytoplasm. The catalysed reaction is O-phospho-L-serine + 2-oxoglutarate = 3-phosphooxypyruvate + L-glutamate. The enzyme catalyses 4-(phosphooxy)-L-threonine + 2-oxoglutarate = (R)-3-hydroxy-2-oxo-4-phosphooxybutanoate + L-glutamate. Its pathway is amino-acid biosynthesis; L-serine biosynthesis; L-serine from 3-phospho-D-glycerate: step 2/3. It functions in the pathway cofactor biosynthesis; pyridoxine 5'-phosphate biosynthesis; pyridoxine 5'-phosphate from D-erythrose 4-phosphate: step 3/5. Its function is as follows. Catalyzes the reversible conversion of 3-phosphohydroxypyruvate to phosphoserine and of 3-hydroxy-2-oxo-4-phosphonooxybutanoate to phosphohydroxythreonine. The chain is Phosphoserine aminotransferase from Desulfosudis oleivorans (strain DSM 6200 / JCM 39069 / Hxd3) (Desulfococcus oleovorans).